The chain runs to 854 residues: N-terminal acetyltransferase A complex subunit NAT1 (854 aa).

At Ser2 the chain carries N-acetylserine. TPR repeat units lie at residues 20–53, 54–87, 91–124, 126–162, 241–274, 384–417, and 452–485; these read ENDQFLEALKLYEGKQYKKSLKLLDAILKKDGSH, VDSLALKGLDLYSVGEKDDAASYVANAIRKIEGA, PICCHVLGIYMRNTKEYKESIKWFTAALNNGSTN, QIYRDLATLQSQIGDFKNALVSRKKYWEAFLGYRANW, FGLLERKATIYMKLGQLKDASIVYRTLIKRNPDN, IWTNYYLSQHFLFLKDFPKAQEYIDAALDHTPTL, and RFINCKTVKYFLRANNIDKAVEVASLFTKNDDSV. Residues 623–667 adopt a coiled-coil conformation; sequence LKRKSDSLDENSDEIQNNGQNSSSQKKKAKKEAAAMNKRKETEAK. The segment at 626–668 is disordered; that stretch reads KSDSLDENSDEIQNNGQNSSSQKKKAKKEAAAMNKRKETEAKS. Ser674 bears the Phosphoserine mark. The stretch at 728–761 is one TPR 8 repeat; that stretch reads ALCFASLNKFAKRFGTTSGLFGSMAIVLLHATRN.

In terms of assembly, component of the N-terminal acetyltransferase A (NatA) complex, which is composed of ARD1, NAT1 and NAT5. Can self-associate. NAT1 associates with the nascent polypeptide chain and the ribosome. The N-terminus is blocked.

Its subcellular location is the cytoplasm. Its function is as follows. Non-catalytic component of the NatA N-terminal acetyltransferase, which catalyzes acetylation of proteins beginning with Met-Ser, Met-Gly and Met-Ala. N-acetylation plays a role in normal eukaryotic translation and processing, protect against proteolytic degradation and protein turnover. NAT1 anchors ARD1 and NAT5 to the ribosome and may present the N termini of nascent polypeptides for acetylation. The chain is N-terminal acetyltransferase A complex subunit NAT1 (NAT1) from Saccharomyces cerevisiae (strain ATCC 204508 / S288c) (Baker's yeast).